We begin with the raw amino-acid sequence, 294 residues long: StAR-related lipid transfer protein 3 (294 aa).

The region spanning 1 to 66 (DGYICNNGMD…YSPPESLAGS (66 aa)) is the MENTAL domain. Positions 55 to 61 (QFYSPPE) match the FFAT motif. A disordered region spans residues 58–77 (SPPESLAGSEEDLDEEGLGR). Residues 79–292 (AVSPQEKALV…LRQRIRDLRS (214 aa)) form the START domain.

This sequence belongs to the STARD3 family. Homodimer. Phosphorylated. Phosphorylation allows the tethering of two membranes that participates in the formation of ER-endosome contacts. Phosphorylation of FFAT motif drives membrane tethering between the endoplasmic reticulum and late endosomes that in turn allows the efficient transport of sterol mediated by the START domain.

It is found in the late endosome membrane. It catalyses the reaction cholesterol(in) = cholesterol(out). Its function is as follows. Sterol-binding protein that mediates cholesterol transport from the endoplasmic reticulum to endosomes. The sterol transport mechanism is triggered by phosphorylation of FFAT motif that leads to membrane tethering between the endoplasmic reticulum and late endosomes. Acts as a lipid transfer protein that redirects sterol to the endosome at the expense of the cell membrane and favors membrane formation inside endosomes. This chain is StAR-related lipid transfer protein 3, found in Salvelinus fontinalis (Brook trout).